The primary structure comprises 195 residues: Adenylate kinase (195 aa).

Gly-11–Thr-16 is a binding site for ATP. The segment at Ser-31–Val-60 is NMP. Residues Thr-32, Arg-37, Arg-58–Val-60, Gly-86–Arg-89, and Gln-93 contribute to the AMP site. The tract at residues Leu-127–Asp-137 is LID. Position 128 (Arg-128) interacts with ATP. Positions 134 and 145 each coordinate AMP. Gln-173 is an ATP binding site.

It belongs to the adenylate kinase family. In terms of assembly, monomer.

The protein localises to the cytoplasm. The enzyme catalyses AMP + ATP = 2 ADP. Its pathway is purine metabolism; AMP biosynthesis via salvage pathway; AMP from ADP: step 1/1. Catalyzes the reversible transfer of the terminal phosphate group between ATP and AMP. Plays an important role in cellular energy homeostasis and in adenine nucleotide metabolism. This chain is Adenylate kinase, found in Cyanothece sp. (strain PCC 7425 / ATCC 29141).